A 70-amino-acid chain; its full sequence is Fumarase D (70 aa).

The protein belongs to the FumD family.

It carries out the reaction (S)-malate = fumarate + H2O. Functionally, in vitro catalyzes the addition of water to fumarate, forming malate. Cannot catalyze the reverse reaction. Cannot use the cis-isomer maleate as substrate. This is Fumarase D from Salmonella typhi.